The sequence spans 308 residues: Methionyl-tRNA formyltransferase (308 aa).

A (6S)-5,6,7,8-tetrahydrofolate-binding site is contributed by 109–112 (SLLP).

It belongs to the Fmt family.

The enzyme catalyses L-methionyl-tRNA(fMet) + (6R)-10-formyltetrahydrofolate = N-formyl-L-methionyl-tRNA(fMet) + (6S)-5,6,7,8-tetrahydrofolate + H(+). Attaches a formyl group to the free amino group of methionyl-tRNA(fMet). The formyl group appears to play a dual role in the initiator identity of N-formylmethionyl-tRNA by promoting its recognition by IF2 and preventing the misappropriation of this tRNA by the elongation apparatus. This Methylococcus capsulatus (strain ATCC 33009 / NCIMB 11132 / Bath) protein is Methionyl-tRNA formyltransferase.